The sequence spans 455 residues: Gamma-aminobutyric acid receptor subunit alpha-1 (455 aa).

A signal peptide spans 1 to 27; the sequence is MKKSRGLSDYLWAWTLILSTLSGRSYG. The Extracellular portion of the chain corresponds to 28-252; sequence QPSQDELKDN…FHLKRKIGYF (225 aa). A glycan (N-linked (GlcNAc...) asparagine) is linked at Asn-37. Arg-93 is a 4-aminobutanoate binding site. The N-linked (GlcNAc...) asparagine glycan is linked to Asn-137. Position 156 (Thr-156) interacts with 4-aminobutanoate. Cysteines 165 and 179 form a disulfide. Residues 253-273 traverse the membrane as a helical segment; sequence VIQTYLPCIMTVILSQVSFWL. Residues 274–278 lie on the Cytoplasmic side of the membrane; it reads NRESV. Residues 279–300 traverse the membrane as a helical segment; it reads PARTVFGVTTVLTMTTLSISAR. Over 301–310 the chain is Extracellular; the sequence is NSLPKVAYAT. The helical transmembrane segment at 311 to 332 threads the bilayer; the sequence is AMDWFIAVCYAFVFSALIEFAT. The Cytoplasmic portion of the chain corresponds to 333-420; sequence VNYFTKRGYA…TFNSVSKIDR (88 aa). A helical transmembrane segment spans residues 421-440; that stretch reads LSRIAFPLLFGIFNLVYWAT. The Extracellular segment spans residues 441-455; that stretch reads YLNREPQLKAPTPHQ.

It belongs to the ligand-gated ion channel (TC 1.A.9) family. Gamma-aminobutyric acid receptor (TC 1.A.9.5) subfamily. GABRA1 sub-subfamily. Heteropentamer, formed by a combination of alpha (GABRA1-6), beta (GABRB1-3), gamma (GABRG1-3), delta (GABRD), epsilon (GABRE), rho (GABRR1-3), pi (GABRP) and theta (GABRQ) subunits, each subunit exhibiting distinct physiological and pharmacological properties. Interacts with UBQLN1. Interacts with TRAK1. Interacts with KIF21B. Identified in a complex of 720 kDa composed of LHFPL4, NLGN2, GABRA1, GABRB2, GABRG2 and GABRB3. Interacts with LHFPL4. Interacts with NLGN2. Interacts with SHISA7; interaction leads to the regulation of GABA(A) receptor trafficking, channel deactivation kinetics and pharmacology. Glycosylated. Expressed in the cerebellum.

Its subcellular location is the postsynaptic cell membrane. The protein localises to the cell membrane. It localises to the cytoplasmic vesicle membrane. It carries out the reaction chloride(in) = chloride(out). Allosterically activated by benzodiazepines, the neuroanesthetic alphaxalone and pentobarbital. Inhibited by the antagonist bicuculline. Potentiated by histamine. Alpha subunit of the heteropentameric ligand-gated chloride channel gated by Gamma-aminobutyric acid (GABA), a major inhibitory neurotransmitter in the brain. GABA-gated chloride channels, also named GABA(A) receptors (GABAAR), consist of five subunits arranged around a central pore and contain GABA active binding site(s) located at the alpha and beta subunit interface(s). When activated by GABA, GABAARs selectively allow the flow of chloride anions across the cell membrane down their electrochemical gradient. Alpha-1/GABRA1-containing GABAARs are largely synaptic. Chloride influx into the postsynaptic neuron following GABAAR opening decreases the neuron ability to generate a new action potential, thereby reducing nerve transmission. GABAARs containing alpha-1 and beta-2 or -3 subunits exhibit synaptogenic activity; the gamma-2 subunit being necessary but not sufficient to induce rapid synaptic contacts formation. GABAARs function also as histamine receptor where histamine binds at the interface of two neighboring beta subunits and potentiates GABA response. GABAARs containing alpha, beta and epsilon subunits also permit spontaneous chloride channel activity while preserving the structural information required for GABA-gated openings. Alpha-1-mediated plasticity in the orbitofrontal cortex regulates context-dependent action selection. Together with rho subunits, may also control neuronal and glial GABAergic transmission in the cerebellum. The polypeptide is Gamma-aminobutyric acid receptor subunit alpha-1 (Mus musculus (Mouse)).